Reading from the N-terminus, the 491-residue chain is Protein nucleotidyltransferase YdiU (491 aa).

ATP is bound by residues Gly94, Gly96, Arg97, Lys117, Asp129, Gly130, Arg180, and Arg187. The active-site Proton acceptor is Asp256. Mg(2+)-binding residues include Asn257 and Asp266. Asp266 contacts ATP.

This sequence belongs to the SELO family. Mg(2+) is required as a cofactor. Mn(2+) serves as cofactor.

It carries out the reaction L-seryl-[protein] + ATP = 3-O-(5'-adenylyl)-L-seryl-[protein] + diphosphate. The catalysed reaction is L-threonyl-[protein] + ATP = 3-O-(5'-adenylyl)-L-threonyl-[protein] + diphosphate. It catalyses the reaction L-tyrosyl-[protein] + ATP = O-(5'-adenylyl)-L-tyrosyl-[protein] + diphosphate. The enzyme catalyses L-histidyl-[protein] + UTP = N(tele)-(5'-uridylyl)-L-histidyl-[protein] + diphosphate. It carries out the reaction L-seryl-[protein] + UTP = O-(5'-uridylyl)-L-seryl-[protein] + diphosphate. The catalysed reaction is L-tyrosyl-[protein] + UTP = O-(5'-uridylyl)-L-tyrosyl-[protein] + diphosphate. Its function is as follows. Nucleotidyltransferase involved in the post-translational modification of proteins. It can catalyze the addition of adenosine monophosphate (AMP) or uridine monophosphate (UMP) to a protein, resulting in modifications known as AMPylation and UMPylation. In Clostridium botulinum (strain Loch Maree / Type A3), this protein is Protein nucleotidyltransferase YdiU.